A 426-amino-acid polypeptide reads, in one-letter code: Testicular acid phosphatase (426 aa).

The first 26 residues, 1-26, serve as a signal peptide directing secretion; sequence MAGLGFWGHPAGPLLLLLLLVLPPRA. The Extracellular portion of the chain corresponds to 27 to 393; it reads LPEGPLVFVA…AAIPPAPVVP (367 aa). His41 (nucleophile) is an active-site residue. Disulfide bonds link Cys159/Cys378, Cys214/Cys312, and Cys353/Cys357. N-linked (GlcNAc...) asparagine glycans are attached at residues Asn191 and Asn269. Asp289 functions as the Proton donor in the catalytic mechanism. N-linked (GlcNAc...) asparagine glycosylation is found at Asn330 and Asn339. The helical transmembrane segment at 394–414 threads the bilayer; that stretch reads LLAGAVAVLVALSLGLGLLAW. The Cytoplasmic portion of the chain corresponds to 415–426; that stretch reads RPGCLRALGGPV.

It belongs to the histidine acid phosphatase family. Homodimer. In terms of processing, glycosylated. As to expression, expressed mainly in the testis. Also expressed in the brain where they are enriched at the postsynaptic sites. Expressed at lower levels in the trachea, prostate, bone marrow, spinal cord, colon, fetal brain, heart, thymus, fetal liver, spleen, leukocytes, ovary, small intestine, pancreas and skeletal muscle. Expression is significantly lower in testicular cancer tissues than in normal testicular tissues. Isoform 3 is expressed in the testis, trachea, prostate and bone marrow.

Its subcellular location is the membrane. It catalyses the reaction a phosphate monoester + H2O = an alcohol + phosphate. Functionally, may dephosphorylate receptor tyrosine-protein kinase ERBB4 and inhibits its ligand-induced proteolytic cleavage. May play a role in odontogenesis. The protein is Testicular acid phosphatase of Homo sapiens (Human).